The following is a 312-amino-acid chain: Olfactory receptor 1D5 (312 aa).

Topologically, residues 1 to 25 are extracellular; that stretch reads MDGDNQSENSQFLLLGISESPEQQQ. Residue Asn-5 is glycosylated (N-linked (GlcNAc...) asparagine). A helical membrane pass occupies residues 26 to 49; that stretch reads ILFWMFLSMYLVTVLGNVLIILAI. Over 50–57 the chain is Cytoplasmic; that stretch reads SSDSHLHT. Residues 58–79 traverse the membrane as a helical segment; the sequence is PMYFFLANLSFTDLFFVTNTIP. The Extracellular portion of the chain corresponds to 80–100; it reads KMLVNFQSQNKAISYAGCLTQ. Cysteines 97 and 189 form a disulfide. The helical transmembrane segment at 101–120 threads the bilayer; sequence LYFLVSLVTLDNLILAVMAY. Residues 121-140 lie on the Cytoplasmic side of the membrane; the sequence is DRYVAICCPLHYVTAMSPGL. Residues 141–158 form a helical membrane-spanning segment; it reads CVLLLSLCWGLSVLYGLL. Residues 159–196 lie on the Extracellular side of the membrane; it reads LTLLLTRVTFCGPREIHYLFCDMYILLRLACSNTHIIH. Residues 197-220 form a helical membrane-spanning segment; sequence TVLVATGCFIFLTPLGFMTTSYVC. The Cytoplasmic portion of the chain corresponds to 221–237; sequence IVRTILQIPSASKKYKA. Residues 238–260 traverse the membrane as a helical segment; that stretch reads FSTCASHLGVVSLFYGTLAMVYL. Topologically, residues 261-271 are extracellular; it reads QPLHTYSMKDS. The helical transmembrane segment at 272–291 threads the bilayer; it reads VATVMYAVVTPMMNPFIYSL. Topologically, residues 292 to 312 are cytoplasmic; it reads RNKDMHGALGRVLRRLFQRPK.

This sequence belongs to the G-protein coupled receptor 1 family.

It is found in the cell membrane. In terms of biological role, odorant receptor. This chain is Olfactory receptor 1D5 (OR1D5), found in Pan paniscus (Pygmy chimpanzee).